We begin with the raw amino-acid sequence, 1052 residues long: Carbamoyl phosphate synthase large chain (1052 aa).

The interval 1-399 is carboxyphosphate synthetic domain; the sequence is MRENVKRVLV…ALQKAVRMLD (399 aa). The ATP site is built by R127, R167, G173, G174, K206, L208, E213, G239, V240, H241, Q282, and E296. The ATP-grasp 1 domain occupies 131 to 325; it reads RETMINVNLP…LAYVSAKLAL (195 aa). Mg(2+) is bound by residues Q282, E296, and N298. The Mn(2+) site is built by Q282, E296, and N298. Residues 400–548 form an oligomerization domain region; sequence LGEPGIIGGK…VTYNGTEDDI (149 aa). Residues 549–930 form a carbamoyl phosphate synthetic domain region; the sequence is EFSNGIRKLL…LKSWLSSSPN (382 aa). Residues 674–864 form the ATP-grasp 2 domain; that stretch reads SRLLDKLGIK…IIDLALTGVI (191 aa). ATP contacts are provided by R710, K749, I751, E756, G780, V781, H782, S783, Q823, and E835. Mg(2+)-binding residues include Q823, E835, and N837. Residues Q823, E835, and N837 each contribute to the Mn(2+) site. The MGS-like domain occupies 930 to 1052; it reads NRLPDQKGIA…YEIGEYGAGI (123 aa). The segment at 931–1052 is allosteric domain; sequence RLPDQKGIAL…YEIGEYGAGI (122 aa).

It belongs to the CarB family. As to quaternary structure, composed of two chains; the small (or glutamine) chain promotes the hydrolysis of glutamine to ammonia, which is used by the large (or ammonia) chain to synthesize carbamoyl phosphate. Tetramer of heterodimers (alpha,beta)4. The cofactor is Mg(2+). Requires Mn(2+) as cofactor.

It catalyses the reaction hydrogencarbonate + L-glutamine + 2 ATP + H2O = carbamoyl phosphate + L-glutamate + 2 ADP + phosphate + 2 H(+). It carries out the reaction hydrogencarbonate + NH4(+) + 2 ATP = carbamoyl phosphate + 2 ADP + phosphate + 2 H(+). Its pathway is amino-acid biosynthesis; L-arginine biosynthesis; carbamoyl phosphate from bicarbonate: step 1/1. It functions in the pathway pyrimidine metabolism; UMP biosynthesis via de novo pathway; (S)-dihydroorotate from bicarbonate: step 1/3. In terms of biological role, large subunit of the glutamine-dependent carbamoyl phosphate synthetase (CPSase). CPSase catalyzes the formation of carbamoyl phosphate from the ammonia moiety of glutamine, carbonate, and phosphate donated by ATP, constituting the first step of 2 biosynthetic pathways, one leading to arginine and/or urea and the other to pyrimidine nucleotides. The large subunit (synthetase) binds the substrates ammonia (free or transferred from glutamine from the small subunit), hydrogencarbonate and ATP and carries out an ATP-coupled ligase reaction, activating hydrogencarbonate by forming carboxy phosphate which reacts with ammonia to form carbamoyl phosphate. The chain is Carbamoyl phosphate synthase large chain from Sulfolobus acidocaldarius (strain ATCC 33909 / DSM 639 / JCM 8929 / NBRC 15157 / NCIMB 11770).